Consider the following 177-residue polypeptide: Large ribosomal subunit protein uL6 (177 aa).

This sequence belongs to the universal ribosomal protein uL6 family. In terms of assembly, part of the 50S ribosomal subunit.

In terms of biological role, this protein binds to the 23S rRNA, and is important in its secondary structure. It is located near the subunit interface in the base of the L7/L12 stalk, and near the tRNA binding site of the peptidyltransferase center. This chain is Large ribosomal subunit protein uL6, found in Laribacter hongkongensis (strain HLHK9).